Reading from the N-terminus, the 829-residue chain is Pre-mRNA-splicing factor syf1 (829 aa).

HAT repeat units lie at residues 15–47, 49–81, 93–125, 127–161, 163–182, 277–312, 380–418, 420–456, 473–505, 544–578, 581–615, and 689–723; these read SLVS…YKLQ, GTVQ…FRTK, SEYQ…FLMQ, PLVT…FANS, EGET…PEDA, GSFE…FEES, DNKE…FYEA, GDLS…MELR, APKR…YVDL, KYFE…KAVD, ISIE…LEEE, and GEID…FEVQ. The disordered stretch occupies residues 799–829; it reads AASEGPKGGSMPVQPVEVHNPDAIDLDEMDE.

The protein belongs to the crooked-neck family. As to quaternary structure, associated with the spliceosome.

It is found in the nucleus. In terms of biological role, involved in pre-mRNA splicing and cell cycle progression. This chain is Pre-mRNA-splicing factor syf1 (msp-41), found in Neurospora crassa (strain ATCC 24698 / 74-OR23-1A / CBS 708.71 / DSM 1257 / FGSC 987).